Reading from the N-terminus, the 306-residue chain is uncharacterized protein (306 aa).

The stretch at 277–306 (TEIIQNYKIANELKKEKQQNKKKNSIELEE) forms a coiled coil.

This is an uncharacterized protein from Saccharolobus islandicus (Sulfolobus islandicus).